Reading from the N-terminus, the 1193-residue chain is Falcilysin (1193 aa).

Residue histidine 129 participates in Zn(2+) binding. Glutamate 132 serves as the catalytic Proton acceptor. Zn(2+) is bound by residues histidine 133 and glutamate 243. The segment at 376-404 (DKTNNHNNNHSNNQSSENNGYSNGSHSSD) is disordered. The segment covering 380–394 (NHNNNHSNNQSSENN) has biased composition (low complexity). Polar residues predominate over residues 395 to 404 (GYSNGSHSSD). Residues 583–619 (LLEGDENYAQEQENLEKQELKKRIENFNEQEKEQVIK) adopt a coiled-coil conformation.

Belongs to the peptidase M16 family. As to quaternary structure, monomer. Component of the hemozoin formation complex (HFC) composed of falcipains FP2A and/or FP2B, plasmepsins PMII, PMIII/HAP and PMIV, heme detoxifying protein HDP and falcilysin FLN. The HFC complex is involved in hemoglobin degradation and detoxification of heme in the food vacuole during the asexual blood stage. The cofactor is Zn(2+). Does not require processing for targeting to the food vacuole or maturation.

The protein resides in the vacuole membrane. Its subcellular location is the plastid. The protein localises to the apicoplast. It is found in the vesicle. In terms of biological role, in the food vacuole, acts downstream of proteases plasmepsins PMI and PMII and falcipains during the catabolism of host hemoglobin by cleaving peptide fragments of alpha and beta hemoglobin subunits generated by PMI and PMII and falcipains. In the apicoplast, degrades apicoplast transit peptides after their cleavage. Prefers bulky hydrophobic amino acids in the P1' position at both acidic and neutral pH. At P2', prefers hydrophobic residues at acidic pH; at neutral pH, these same residues are abundant but prefers Arg. At P3', prefers hydrophobic residues, especially Met, at both pH conditions. At P4' and P5', prefers acidic residues at acidic pH, however, at neutral pH, the enzyme is less selective at these positions. The optimal site cleavage at acidic pH is YNEHS-|-FFMEE and, at neutral pH, MKRHS-|-FRMRG. This Plasmodium falciparum (isolate 3D7) protein is Falcilysin.